A 211-amino-acid polypeptide reads, in one-letter code: Protein-L-isoaspartate O-methyltransferase (211 aa).

Ser-60 is an active-site residue.

Belongs to the methyltransferase superfamily. L-isoaspartyl/D-aspartyl protein methyltransferase family.

Its subcellular location is the cytoplasm. The catalysed reaction is [protein]-L-isoaspartate + S-adenosyl-L-methionine = [protein]-L-isoaspartate alpha-methyl ester + S-adenosyl-L-homocysteine. Functionally, catalyzes the methyl esterification of L-isoaspartyl residues in peptides and proteins that result from spontaneous decomposition of normal L-aspartyl and L-asparaginyl residues. It plays a role in the repair and/or degradation of damaged proteins. This chain is Protein-L-isoaspartate O-methyltransferase, found in Pseudomonas paraeruginosa (strain DSM 24068 / PA7) (Pseudomonas aeruginosa (strain PA7)).